The following is a 120-amino-acid chain: NAD(P)H-quinone oxidoreductase subunit 3, chloroplastic (120 aa).

3 consecutive transmembrane segments (helical) span residues 9 to 29, 60 to 80, and 88 to 108; these read IFWA…IISG, ICYY…VFLY, and ILGV…IVGS.

This sequence belongs to the complex I subunit 3 family. As to quaternary structure, NDH is composed of at least 16 different subunits, 5 of which are encoded in the nucleus.

The protein resides in the plastid. Its subcellular location is the chloroplast thylakoid membrane. It catalyses the reaction a plastoquinone + NADH + (n+1) H(+)(in) = a plastoquinol + NAD(+) + n H(+)(out). It carries out the reaction a plastoquinone + NADPH + (n+1) H(+)(in) = a plastoquinol + NADP(+) + n H(+)(out). Its function is as follows. NDH shuttles electrons from NAD(P)H:plastoquinone, via FMN and iron-sulfur (Fe-S) centers, to quinones in the photosynthetic chain and possibly in a chloroplast respiratory chain. The immediate electron acceptor for the enzyme in this species is believed to be plastoquinone. Couples the redox reaction to proton translocation, and thus conserves the redox energy in a proton gradient. The sequence is that of NAD(P)H-quinone oxidoreductase subunit 3, chloroplastic from Morus indica (Mulberry).